We begin with the raw amino-acid sequence, 535 residues long: CTP synthase (535 aa).

Residues 1–267 are amidoligase domain; it reads MTKFIFVTGG…DDIVIKRLDL (267 aa). Residue Ser13 coordinates CTP. Ser13 contacts UTP. 14-19 is a binding site for ATP; the sequence is SLGKGI. Tyr54 contributes to the L-glutamine binding site. Asp71 contacts ATP. Residues Asp71 and Glu141 each contribute to the Mg(2+) site. CTP contacts are provided by residues 148-150, 188-193, and Lys224; these read DIE and KTKPTQ. UTP contacts are provided by residues 188–193 and Lys224; that span reads KTKPTQ. 240-242 contributes to the ATP binding site; that stretch reads RDA. Positions 293-535 constitute a Glutamine amidotransferase type-1 domain; sequence TIGLVGKYVS…VEAAYKHQNK (243 aa). Residue Gly355 participates in L-glutamine binding. Catalysis depends on Cys382, which acts as the Nucleophile; for glutamine hydrolysis. Residues 383–386, Glu406, and Arg463 contribute to the L-glutamine site; that span reads LGMQ. Catalysis depends on residues His508 and Glu510.

Belongs to the CTP synthase family. As to quaternary structure, homotetramer.

It carries out the reaction UTP + L-glutamine + ATP + H2O = CTP + L-glutamate + ADP + phosphate + 2 H(+). The catalysed reaction is L-glutamine + H2O = L-glutamate + NH4(+). It catalyses the reaction UTP + NH4(+) + ATP = CTP + ADP + phosphate + 2 H(+). Its pathway is pyrimidine metabolism; CTP biosynthesis via de novo pathway; CTP from UDP: step 2/2. With respect to regulation, allosterically activated by GTP, when glutamine is the substrate; GTP has no effect on the reaction when ammonia is the substrate. The allosteric effector GTP functions by stabilizing the protein conformation that binds the tetrahedral intermediate(s) formed during glutamine hydrolysis. Inhibited by the product CTP, via allosteric rather than competitive inhibition. Its function is as follows. Catalyzes the ATP-dependent amination of UTP to CTP with either L-glutamine or ammonia as the source of nitrogen. Regulates intracellular CTP levels through interactions with the four ribonucleotide triphosphates. This chain is CTP synthase, found in Staphylococcus haemolyticus (strain JCSC1435).